A 500-amino-acid chain; its full sequence is Na(+)/H(+) antiporter NhaB (500 aa).

Helical transmembrane passes span 34-54 (PLFF…EFIF), 62-82 (CYPL…GMTT), 90-110 (LVHN…IYFM), 129-149 (ALLG…LDAL), 150-170 (TVTA…HRVA), 205-225 (LLMH…VGEP), 241-261 (FFSK…VTCV), 311-331 (ILIV…LLVI), 350-370 (FKDA…VAVI), 394-414 (MLFI…VATI), 449-469 (VATP…IAPL), and 477-497 (MVWM…YAVS).

Belongs to the NhaB Na(+)/H(+) (TC 2.A.34) antiporter family.

The protein localises to the cell inner membrane. It carries out the reaction 2 Na(+)(in) + 3 H(+)(out) = 2 Na(+)(out) + 3 H(+)(in). Functionally, na(+)/H(+) antiporter that extrudes sodium in exchange for external protons. In Pseudomonas fluorescens (strain ATCC BAA-477 / NRRL B-23932 / Pf-5), this protein is Na(+)/H(+) antiporter NhaB.